The following is a 166-amino-acid chain: Short form salivary protein D7R1 (166 aa).

Residues 1 to 21 (MFRKVFSVALVTCGLLVIVQA) form the signal peptide.

The protein belongs to the PBP/GOBP family. Interacts with host coagulation factor XII (F12) (inactive and activated) (via amino acids 1-77). Interacts with host high molecular weight kininogen (KNG1) (via amino acids 402-532). In terms of tissue distribution, female salivary gland (at protein level).

It localises to the secreted. With respect to regulation, zn(2+) modulates binding to host coagulation factor XII (F12) and high molecular weight kininogen (KNG1). Functionally, salivary protein with anticoagulant activity that targets the intrinsic blood coagulation pathway in the host. Inhibits activation of the host plasma contact system by preventing the reciprocal activation of host coagulation factor XII (F12) and prekallikrein (KLKB1). Attenuates generation of bradykinin in host plasma. May bind and sequester different mediators involved in the host response, such as serotonin and histamine. The protein is Short form salivary protein D7R1 of Anopheles stephensi (Indo-Pakistan malaria mosquito).